Here is a 247-residue protein sequence, read N- to C-terminus: MSLSITHEKSLIDNYIWILFDKSKAIVIDPGESEKIINFLDKNNLTLEFIFLTHGHCDHTKGVFSLKEKFPNASLFVPIGLELGLGESIIKEGDELNLLNSTFNVLELPGHTDNHIGIMYKDNLFCGDVLFSAGCGRVGSNYKDMYLSLKKIKSMDDKTKIYFSHEYTLDNLKFAHYIDPKNKNIINYIEVFKEKPDTVSAPTTLLLEKEINPFLRLSENIDIKNKINNEFDAFVYLRKLKDKFNSI.

Zn(2+)-binding residues include His-54, His-56, Asp-58, His-59, His-111, Asp-128, and His-165.

Belongs to the metallo-beta-lactamase superfamily. Glyoxalase II family. Monomer. The cofactor is Zn(2+).

It catalyses the reaction an S-(2-hydroxyacyl)glutathione + H2O = a 2-hydroxy carboxylate + glutathione + H(+). Its pathway is secondary metabolite metabolism; methylglyoxal degradation; (R)-lactate from methylglyoxal: step 2/2. In terms of biological role, thiolesterase that catalyzes the hydrolysis of S-D-lactoyl-glutathione to form glutathione and D-lactic acid. This chain is Hydroxyacylglutathione hydrolase 1, found in Vibrio vulnificus (strain YJ016).